A 161-amino-acid polypeptide reads, in one-letter code: Low molecular weight phosphotyrosine protein phosphatase (161 aa).

Cysteine 14 functions as the Nucleophile in the catalytic mechanism. Arginine 20 (transition state stabilizer) is an active-site residue. Serine 57 is subject to Phosphoserine. Aspartate 133 acts as the Proton donor in catalysis.

It belongs to the low molecular weight phosphotyrosine protein phosphatase family.

Its subcellular location is the cytoplasm. It carries out the reaction O-phospho-L-tyrosyl-[protein] + H2O = L-tyrosyl-[protein] + phosphate. The enzyme catalyses a phosphate monoester + H2O = an alcohol + phosphate. In terms of biological role, acts on tyrosine phosphorylated proteins, low-MW aryl phosphates and natural and synthetic acyl phosphates. The chain is Low molecular weight phosphotyrosine protein phosphatase from Saccharomyces cerevisiae (strain ATCC 204508 / S288c) (Baker's yeast).